A 179-amino-acid chain; its full sequence is Acireductone dioxygenase (179 aa).

Positions 7–26 (MDDAPGDPRQPHRPDPGRPV) are disordered. Fe(2+) is bound by residues histidine 88, histidine 90, glutamate 94, and histidine 133. The Ni(2+) site is built by histidine 88, histidine 90, glutamate 94, and histidine 133.

This sequence belongs to the acireductone dioxygenase (ARD) family. As to quaternary structure, monomer. Interacts with MMP14. Fe(2+) serves as cofactor. Requires Ni(2+) as cofactor. As to expression, detected in heart, colon, lung, stomach, brain, spleen, liver, skeletal muscle and kidney.

Its subcellular location is the cytoplasm. The protein localises to the nucleus. It localises to the cell membrane. The enzyme catalyses 1,2-dihydroxy-5-(methylsulfanyl)pent-1-en-3-one + O2 = 4-methylsulfanyl-2-oxobutanoate + formate + 2 H(+). It catalyses the reaction 1,2-dihydroxy-5-(methylsulfanyl)pent-1-en-3-one + O2 = 3-(methylsulfanyl)propanoate + CO + formate + 2 H(+). It participates in amino-acid biosynthesis; L-methionine biosynthesis via salvage pathway; L-methionine from S-methyl-5-thio-alpha-D-ribose 1-phosphate: step 5/6. In terms of biological role, catalyzes 2 different reactions between oxygen and the acireductone 1,2-dihydroxy-3-keto-5-methylthiopentene (DHK-MTPene) depending upon the metal bound in the active site. Fe-containing acireductone dioxygenase (Fe-ARD) produces formate and 2-keto-4-methylthiobutyrate (KMTB), the alpha-ketoacid precursor of methionine in the methionine recycle pathway. Ni-containing acireductone dioxygenase (Ni-ARD) produces methylthiopropionate, carbon monoxide and formate, and does not lie on the methionine recycle pathway. Also down-regulates cell migration mediated by MMP14. Necessary for hepatitis C virus replication in an otherwise non-permissive cell line. The chain is Acireductone dioxygenase from Homo sapiens (Human).